A 977-amino-acid chain; its full sequence is Receptor protein-tyrosine kinase CEPR2 (977 aa).

The N-terminal stretch at 1–31 (MSRRPDLLRGSVVATVAATFLLFIFPPNVES) is a signal peptide. Over 32 to 620 (TVEKQALFRF…NVKRNSSLDG (589 aa)) the chain is Extracellular. N-linked (GlcNAc...) asparagine glycosylation is present at Asn85. LRR repeat units lie at residues 97-121 (LTKL…IVNC), 122-146 (KNLK…PLKS), 148-167 (EILD…WIGN), 168-192 (MNQL…SIGG), 193-217 (LKKL…IFDL), 219-241 (ALDT…ISRL), 242-265 (VNLT…IKNL), 266-288 (TRLR…ELGV), 290-312 (KELR…GFGD), 313-338 (LSHL…GRFS), 340-361 (LDTV…LCQN), 363-385 (KLQF…YGEC), 386-409 (KSLL…FWSL), 411-433 (LAKM…IGLS), 434-457 (TELS…LGRL), 458-481 (TNIE…VGDL), 482-504 (KELS…ELKN), 506-529 (VKLV…LSQI), 530-553 (ASLN…LVKL), and 555-576 (LSFI…LLAV). Asn128 carries N-linked (GlcNAc...) asparagine glycosylation. An N-linked (GlcNAc...) asparagine glycan is attached at Asn205. Residues Asn243, Asn251, and Asn264 are each glycosylated (N-linked (GlcNAc...) asparagine). N-linked (GlcNAc...) asparagine glycosylation is found at Asn301 and Asn325. 2 N-linked (GlcNAc...) asparagine glycosylation sites follow: Asn469 and Asn491. Residue Asn615 is glycosylated (N-linked (GlcNAc...) asparagine). The helical transmembrane segment at 621–641 (TLLFLALAIVVVVLVSGLFAL) threads the bilayer. Over 642–977 (RYRVVKIREL…SQDTTGKITV (336 aa)) the chain is Cytoplasmic. Residues 683–965 (LDEDHVIGSG…RKLDDADPCV (283 aa)) enclose the Protein kinase domain. Residues 689-697 (IGSGSAGKV) and Lys712 each bind ATP. Residue Tyr801 is modified to Phosphotyrosine. The active-site Proton acceptor is the Asp814. Ser846 is subject to Phosphoserine. 2 positions are modified to phosphotyrosine: Tyr854 and Tyr861.

It belongs to the protein kinase superfamily. Ser/Thr protein kinase family. As to quaternary structure, interacts with the root-derived peptide CEP1. Binds to the ammonium transporter AMT1-1. Expressed in mature leaves, primary roots, and the root tips of both primary and lateral roots.

It is found in the cell membrane. The catalysed reaction is L-tyrosyl-[protein] + ATP = O-phospho-L-tyrosyl-[protein] + ADP + H(+). In terms of biological role, receptor kinase involved in the perception of C-terminally encoded plant signaling peptide (CEP) and subsequent regulation of root and shoot development. Together with CEPR1, mediates systemic nitrogen (N)-demand signaling upon the perception of root-derived peptides (e.g. CEP1) via the up-regulation of genes involved in N uptake and assimilation pathways. In Arabidopsis thaliana (Mouse-ear cress), this protein is Receptor protein-tyrosine kinase CEPR2.